Consider the following 547-residue polypeptide: Mitogen-activated protein kinase 15 (547 aa).

The tract at residues 1 to 20 (MCAAEVDRHVSQRYLIKRRL) is ubiquitin-conjugating. The Protein kinase domain maps to 14 to 305 (YLIKRRLGKG…AEQALQHPYV (292 aa)). ATP contacts are provided by residues 20-28 (LGKGAYGIV) and Lys-43. Residue Asp-138 is the Proton acceptor of the active site. Thr-176 carries the post-translational modification Phosphothreonine. The short motif at 176–178 (TEY) is the TXY element. The residue at position 178 (Tyr-178) is a Phosphotyrosine. Residues 266–286 (LDALLPPDTPPEALDLLKRLL) form a necessary to interact with ESRRA, to regulate its subcellular localization and to inhibit its transcriptional activity region. Positions 301–380 (QHPYVQRFHC…SQRQSLKPGV (80 aa)) are requires for interaction with GABARAP, MAP1LC3B AND GABARAPL1. The disordered stretch occupies residues 370 to 503 (ASQRQSLKPG…EAPEPRPGRR (134 aa)). PXXXP motif repeat units lie at residues 378-382 (PGVLP) and 385-389 (LAETP). 2 PXXXP motif; regulates binding with chromatin and interaction with PCNA repeats span residues 393–397 (RGPKP) and 401–405 (HGHDP). Over residues 401-414 (HGHDPEHVEVRRQS) the composition is skewed to basic and acidic residues. At Arg-449 the chain carries Omega-N-methylarginine. Residues 454-465 (SLTSQAAAQAAN) show a composition bias toward polar residues. Residues 481–490 (AVGARRVPSR) show a composition bias toward low complexity. Residues 491–500 (LPREAPEPRP) are compositionally biased toward basic and acidic residues.

It belongs to the protein kinase superfamily. CMGC Ser/Thr protein kinase family. MAP kinase subfamily. In terms of assembly, interacts with CSK/c-Src, ABL1, RET and TGFB1I1. Interacts with GABARAP, MAP1LC3B and GABARAPL1; controls, in a kinase-dependent fashion, both basal and starvation-induced autophagy. Interacts with ESRRA; promotes re-localization of ESRRA to the cytoplasm through a XPO1-dependent mechanism then inhibits ESRRA transcriptional activity. Interacts with PCNA; the interaction is chromatin binding- and kinase activity-dependent and prevents MDM2-mediated PCNA destruction by inhibiting the association of PCNA with MDM2. Interacts with DVL2. Interacts with CLIC3; MAPK15 does not phosphorylates CLIC3. Post-translationally, autophosphorylated on Thr-176 and Tyr-178; activates the enzyme. In terms of processing, dephosphorylated by PTPN1. Ubiquitinated. Ubiquitination may allow its tight kinase activity regulation and rapid turnover. May be ubiquitinated by a SCF E3 ligase. As to expression, ubiquitously expressed at a weak level. Highest expression is found in testis and to a lower extent in lung.

It localises to the cytoplasm. Its subcellular location is the cytoskeleton. The protein resides in the cilium basal body. It is found in the cell junction. The protein localises to the tight junction. It localises to the microtubule organizing center. Its subcellular location is the centrosome. The protein resides in the centriole. It is found in the cytoplasmic vesicle. The protein localises to the autophagosome. It localises to the golgi apparatus. Its subcellular location is the nucleus. The protein resides in the spindle. The catalysed reaction is L-seryl-[protein] + ATP = O-phospho-L-seryl-[protein] + ADP + H(+). It carries out the reaction L-threonyl-[protein] + ATP = O-phospho-L-threonyl-[protein] + ADP + H(+). With respect to regulation, activated by threonine and tyrosine phosphorylation. Inhibited by dual specificity phosphatases, such as DUSP1. Phosphorylation and activation in response to DNA damaging agents, serum stimulation. Constitutively activated when phosphorylated on Tyr-178. Activity depends on the relative rates of MAPK15 autophosphorylation and dephosphorylation by PTPN1. Its function is as follows. Atypical MAPK protein that regulates several process such as autophagy, ciliogenesis, protein trafficking/secretion and genome integrity, in a kinase activity-dependent manner. Controls both, basal and starvation-induced autophagy throught its interaction with GABARAP, MAP1LC3B and GABARAPL1 leading to autophagosome formation, SQSTM1 degradation and reduced MAP1LC3B inhibitory phosphorylation. Regulates primary cilium formation and the localization of ciliary proteins involved in cilium structure, transport, and signaling. Prevents the relocation of the sugar-adding enzymes from the Golgi to the endoplasmic reticulum, thereby restricting the production of sugar-coated proteins. Upon amino-acid starvation, mediates transitional endoplasmic reticulum site disassembly and inhibition of secretion. Binds to chromatin leading to MAPK15 activation and interaction with PCNA, that which protects genomic integrity by inhibiting MDM2-mediated degradation of PCNA. Regulates DA transporter (DAT) activity and protein expression via activation of RhoA. In response to H(2)O(2) treatment phosphorylates ELAVL1, thus preventing it from binding to the PDCD4 3'UTR and rendering the PDCD4 mRNA accessible to miR-21 and leading to its degradation and loss of protein expression. Also functions in a kinase activity-independent manner as a negative regulator of growth. Phosphorylates in vitro FOS and MBP. During oocyte maturation, plays a key role in the microtubule organization and mei- otic cell cycle progression in oocytes, fertilized eggs, and early embryos. Interacts with ESRRA promoting its re-localization from the nucleus to the cytoplasm and then prevents its transcriptional activity. This chain is Mitogen-activated protein kinase 15 (Mapk15), found in Rattus norvegicus (Rat).